A 566-amino-acid polypeptide reads, in one-letter code: Deformed epidermal autoregulatory factor 1 homolog (566 aa).

Disordered regions lie at residues 33–62 and 163–191; these read AESEAEEPVLSRDEDSEEDADSEAERETRR and GLKGPAAPLTPGPQSPPTPLAPGQEKGGT. Residues 170 to 182 show a composition bias toward pro residues; that stretch reads PLTPGPQSPPTPL. T172 is modified (phosphothreonine). Phosphoserine is present on S177. A Phosphothreonine modification is found at T180. Positions 194-274 constitute an SAND domain; the sequence is NWDPSVYDSE…QCLIQDGILN (81 aa). Positions 300–306 match the Nuclear localization signal motif; the sequence is PYKRRKK. Positions 404 to 479 are interaction with LMO4; sequence IAPFPEAALP…QLKTLFEQAK (76 aa). At T433 the chain carries Phosphothreonine. S444 and S449 each carry phosphoserine. Positions 505, 508, 516, 519, 525, 529, 537, and 541 each coordinate Zn(2+). Residues 505–541 form an MYND-type zinc finger; that stretch reads CVNCGREAMSECTGCHKVNYCSTFCQRKDWKDHQHVC.

In terms of assembly, homodimer. Isoform 1 and isoform 2 may form a heterodimer. May interact with the corepressors NCOR1 and NCRO2. Identified in a complex with XRCC5 and XRCC6. Interacts (via the SAND domain) with the DNA-PK complex subunit XRCC6; the interaction is direct with XRCC6 and may be inhibited by DNA-binding. Interacts with LMO4; LMO4 blocks export from nucleus. Interacts with LMO2 and CLIM2. May be phosphorylated by DNA-PK complex in a DNA independent manner (in vitro). Ubiquitously expressed during embryogenesis, with higher expression in regions of the central nervous system, dorsal root ganglia, submandibular gland, epidermis and breast. In 12-week-old NOD mice, expression of isoform 2 is sevenfold higher in lymph node stromal elements than in T-cells and tenfold higher than in B-cells.

It localises to the nucleus. The protein localises to the cytoplasm. Its function is as follows. Transcription factor that binds to sequence with multiple copies of 5'-TTC[CG]G-3' present in its own promoter and that of the HNRPA2B1 gene. Down-regulates transcription of these genes. Binds to the retinoic acid response element (RARE) 5'-AGGGTTCACCGAAAGTTCA-3'. Activates the proenkephalin gene independently of promoter binding, probably through protein-protein interaction. Regulates epithelial cell proliferation and side-branching in the mammary gland. Required for neural tube closure and skeletal patterning. Controls the expression of peripheral tissue antigens in pancreatic lymph nodes. Isoform 1 displays greater transcriptional activity than isoform 2. Isoform 2 may inhibit transcriptional activity of isoform 1 by interacting with it and retaining it in the cytoplasm. Transcriptional activator of EIF4G3. May also involved in behavior. This is Deformed epidermal autoregulatory factor 1 homolog (Deaf1) from Mus musculus (Mouse).